Reading from the N-terminus, the 622-residue chain is MPAIPSHVPEPSRTDPALIRNFCIIAHIDHGKSTLADRMLQLTGVVEQRQMRAQYLDRMDIERERGITIKSQAVRLPWAPSHDKGATHILNMIDTPGHVDFTYEVSRSLAACEGTILLVDAAQGIEAQTLANLYLAMENDLTIIPVLNKIDLPAAQPEKFAEELANLVGCDPDDVLKVSAKTGLGVDVLLDKVVAEVPAPVGVKDAPARAMIFDSVYDSYRGVVTYVRVIDGQLNKRERIRMMSTGATHELLEIGTNSPEMLSADGLGVGEVGYLITGVKDVRQSKVGDTVTSQHKGATEALGGYKDPRPMVFSGLYPLDGSDYPELREALDKLQLNDAALVYEPETSAALGFGFRVGFLGLLHLDVIRERLEREFGLDLIATAPNVVYRVIMEDGTEHTVTNPSEFPEGKINEVYEPVVRATILAPTEFIGSIMELCQTRRGTLLGMDYLSEDRVEIRYTLPLAEIVFDFFDQLKSKTRGYASLDYEPTGEQTSSLVKVDILLHGDKVDAFSAITHKDAAYAYGVRLVAKLRELIPRQAFEVPIQAAIGSRVIARETIRAIRKDVLAKCYGGDISRKRKLLEKQKEGKKRMKMVGSVEVPQEAFIAVLSSDDSAGSGKGKK.

The 185-residue stretch at 17-201 (ALIRNFCIIA…KVVAEVPAPV (185 aa)) folds into the tr-type G domain. GTP is bound by residues 29–34 (DHGKST) and 148–151 (NKID).

Belongs to the TRAFAC class translation factor GTPase superfamily. Classic translation factor GTPase family. LepA subfamily.

It localises to the cell membrane. It catalyses the reaction GTP + H2O = GDP + phosphate + H(+). Required for accurate and efficient protein synthesis under certain stress conditions. May act as a fidelity factor of the translation reaction, by catalyzing a one-codon backward translocation of tRNAs on improperly translocated ribosomes. Back-translocation proceeds from a post-translocation (POST) complex to a pre-translocation (PRE) complex, thus giving elongation factor G a second chance to translocate the tRNAs correctly. Binds to ribosomes in a GTP-dependent manner. This chain is Elongation factor 4, found in Streptomyces coelicolor (strain ATCC BAA-471 / A3(2) / M145).